Reading from the N-terminus, the 422-residue chain is Tyrosine--tRNA ligase 1 (422 aa).

Position 36 (Y36) interacts with L-tyrosine. The 'HIGH' region motif lies at 41–50; the sequence is PTAGSLHIGH. L-tyrosine is bound by residues Y173 and Q177. The 'KMSKS' region signature appears at 233 to 237; sequence KFGKT. Residue K236 participates in ATP binding. Residues 355–419 form the S4 RNA-binding domain; it reads SDVVTLLLET…GKKQFAMVKL (65 aa).

The protein belongs to the class-I aminoacyl-tRNA synthetase family. TyrS type 1 subfamily. In terms of assembly, homodimer.

The protein localises to the cytoplasm. It carries out the reaction tRNA(Tyr) + L-tyrosine + ATP = L-tyrosyl-tRNA(Tyr) + AMP + diphosphate + H(+). In terms of biological role, catalyzes the attachment of tyrosine to tRNA(Tyr) in a two-step reaction: tyrosine is first activated by ATP to form Tyr-AMP and then transferred to the acceptor end of tRNA(Tyr). This chain is Tyrosine--tRNA ligase 1, found in Vibrio vulnificus (strain YJ016).